Reading from the N-terminus, the 299-residue chain is Ankyrin repeat domain-containing protein 54 (299 aa).

Positions 1–27 (MAATGGGAEDESRSGRSSSEGECAVAP) are disordered. An N-acetylalanine modification is found at Ala-2. The residue at position 62 (Ser-62) is a Phosphoserine. The Nuclear localization signal (NLS) motif lies at 98–116 (RRLGPTGKEVHALKRLRDS). 4 ANK repeats span residues 108–137 (HALKRLRDSANANDIETVQQLLEDGADPCA), 141–170 (KGRTALHFASCNGNDQIVQLLLDHGADPNQ), 174–203 (LGNTPLHLAACTNHVPVITTLLRGGARVDA), and 207–239 (AGRTPLHLAKSKLNILQEGHSQCLEAVRLEVKQ). The interval 140-240 (DKGRTALHFA…EAVRLEVKQI (101 aa)) is LYN-binding. The short motif at 282–292 (LLASFTSLSLQ) is the Nuclear export signal (NES) element.

Interacts (via ankyrin repeat region) with LYN (via SH3-domain) in an activation-independent status of LYN. Forms a multiprotein complex with LYN and HCLS1. Interacts with TSN2, VAV1, DBNL and LASP1.

Its subcellular location is the nucleus. It is found in the cytoplasm. The protein resides in the midbody. In terms of biological role, plays an important role in regulating intracellular signaling events associated with erythroid terminal differentiation. The polypeptide is Ankyrin repeat domain-containing protein 54 (Ankrd54) (Rattus norvegicus (Rat)).